We begin with the raw amino-acid sequence, 348 residues long: tRNA pseudouridine synthase D (348 aa).

Asp-84 acts as the Nucleophile in catalysis. Positions 162-308 constitute a TRUD domain; sequence GVPNYFGPQR…ARMDRRPLCL (147 aa).

It belongs to the pseudouridine synthase TruD family.

It catalyses the reaction uridine(13) in tRNA = pseudouridine(13) in tRNA. Its function is as follows. Responsible for synthesis of pseudouridine from uracil-13 in transfer RNAs. In Chromohalobacter salexigens (strain ATCC BAA-138 / DSM 3043 / CIP 106854 / NCIMB 13768 / 1H11), this protein is tRNA pseudouridine synthase D.